The following is a 337-amino-acid chain: tRNA N6-adenosine threonylcarbamoyltransferase (337 aa).

Positions 111 and 115 each coordinate Fe cation. Residues Leu-134–Gly-138, Asp-167, Gly-180, and Asn-272 contribute to the substrate site. Residue Asp-300 coordinates Fe cation.

This sequence belongs to the KAE1 / TsaD family. The cofactor is Fe(2+).

Its subcellular location is the cytoplasm. The enzyme catalyses L-threonylcarbamoyladenylate + adenosine(37) in tRNA = N(6)-L-threonylcarbamoyladenosine(37) in tRNA + AMP + H(+). Functionally, required for the formation of a threonylcarbamoyl group on adenosine at position 37 (t(6)A37) in tRNAs that read codons beginning with adenine. Is involved in the transfer of the threonylcarbamoyl moiety of threonylcarbamoyl-AMP (TC-AMP) to the N6 group of A37, together with TsaE and TsaB. TsaD likely plays a direct catalytic role in this reaction. The chain is tRNA N6-adenosine threonylcarbamoyltransferase from Escherichia coli O45:K1 (strain S88 / ExPEC).